Consider the following 508-residue polypeptide: ADP-ribosylarginine hydrolase CG3568 (508 aa).

ADP-D-ribose is bound by residues arginine 209, glycine 349, glycine 351, glycine 353, valine 354, tryptophan 355, tryptophan 390, aspartate 441, asparagine 448, glutamate 449, glycine 459, and aspartate 460.

The enzyme catalyses N(omega)-(ADP-D-ribosyl)-L-arginyl-[protein] + H2O = ADP-D-ribose + L-arginyl-[protein]. It carries out the reaction N(omega)-(ADP-D-ribosyl)-L-arginine + H2O = ADP-D-ribose + L-arginine. Protein ADP-ribosyl hydrolase that specifically removes mono-ADP-ribosyl modifications from protein arginine residues. This Drosophila melanogaster (Fruit fly) protein is ADP-ribosylarginine hydrolase CG3568.